The sequence spans 339 residues: MKNTADITVLGAGSYGTALAISLASNGHRTMLWGHEPEHIENLKNDKSNEAFLPGIPLPDLLIPEADLATALAASNNVLVVVPSHVFGLVLSQAKPLLRKDSRIVWATKGLEPETGRLIQDVAREVLGDEYPLAVLSGPTFAKELAAGMPTAISIAGTDPQFTKDLVELLHSPKRLRVYANDDFIGLQLGGAVKNVIAIGAGLSDGIGFGANARTALITRGLVELTRLGEAMGAQASTFMGMAGLGDLVLTCTDNQSRNRRFGLALGKGSDVEAAQEEIGQVVEGYRNTKEVYTLAKRLGVEMPITEQVYQVLYKGKSPVDAAKELLSREQKSETSSAE.

4 residues coordinate NADPH: Ser-14, Tyr-15, His-35, and Lys-109. Sn-glycerol 3-phosphate contacts are provided by Lys-109, Gly-138, and Thr-140. An NADPH-binding site is contributed by Ala-142. Lys-194, Asp-247, Ser-257, Arg-258, and Asn-259 together coordinate sn-glycerol 3-phosphate. Catalysis depends on Lys-194, which acts as the Proton acceptor. Arg-258 contributes to the NADPH binding site. The NADPH site is built by Val-282 and Glu-284.

It belongs to the NAD-dependent glycerol-3-phosphate dehydrogenase family.

The protein resides in the cytoplasm. It catalyses the reaction sn-glycerol 3-phosphate + NAD(+) = dihydroxyacetone phosphate + NADH + H(+). The catalysed reaction is sn-glycerol 3-phosphate + NADP(+) = dihydroxyacetone phosphate + NADPH + H(+). It participates in membrane lipid metabolism; glycerophospholipid metabolism. In terms of biological role, catalyzes the reduction of the glycolytic intermediate dihydroxyacetone phosphate (DHAP) to sn-glycerol 3-phosphate (G3P), the key precursor for phospholipid synthesis. The sequence is that of Glycerol-3-phosphate dehydrogenase [NAD(P)+] from Shewanella halifaxensis (strain HAW-EB4).